Consider the following 256-residue polypeptide: uncharacterized protein (256 aa).

The signal sequence occupies residues 1–22 (MGYLKRFALYISVMILIFAIAG). A lipid anchor (N-palmitoyl cysteine) is attached at Cys23. Cys23 carries the S-diacylglycerol cysteine lipid modification.

Belongs to the staphylococcal tandem lipoprotein family.

It is found in the cell membrane. This is an uncharacterized protein from Staphylococcus aureus (strain COL).